The following is a 581-amino-acid chain: Threonine--tRNA ligase (581 aa).

The interval 185 to 478 (DHRKLGKELD…LVEHYGGAFP (294 aa)) is catalytic. 3 residues coordinate Zn(2+): C278, H329, and H455.

This sequence belongs to the class-II aminoacyl-tRNA synthetase family. As to quaternary structure, homodimer. Requires Zn(2+) as cofactor.

Its subcellular location is the cytoplasm. The catalysed reaction is tRNA(Thr) + L-threonine + ATP = L-threonyl-tRNA(Thr) + AMP + diphosphate + H(+). Its function is as follows. Catalyzes the attachment of threonine to tRNA(Thr) in a two-step reaction: L-threonine is first activated by ATP to form Thr-AMP and then transferred to the acceptor end of tRNA(Thr). Also edits incorrectly charged L-seryl-tRNA(Thr). The sequence is that of Threonine--tRNA ligase from Borreliella burgdorferi (strain ATCC 35210 / DSM 4680 / CIP 102532 / B31) (Borrelia burgdorferi).